The following is a 585-amino-acid chain: Pyruvate kinase (585 aa).

Arg-32 contributes to the substrate binding site. 4 residues coordinate K(+): Asn-34, Ser-36, Asp-66, and Thr-67. ATP is bound at residue 34-37 (NFSH). Residues Arg-73 and Lys-156 each contribute to the ATP site. Residue Glu-221 participates in Mg(2+) binding. Substrate is bound by residues Gly-244, Asp-245, and Thr-277. Asp-245 contacts Mg(2+).

This sequence belongs to the pyruvate kinase family. It in the C-terminal section; belongs to the PEP-utilizing enzyme family. It depends on Mg(2+) as a cofactor. The cofactor is K(+).

The enzyme catalyses pyruvate + ATP = phosphoenolpyruvate + ADP + H(+). It participates in carbohydrate degradation; glycolysis; pyruvate from D-glyceraldehyde 3-phosphate: step 5/5. This Staphylococcus aureus (strain bovine RF122 / ET3-1) protein is Pyruvate kinase (pyk).